Reading from the N-terminus, the 302-residue chain is MAFSTSDEKRIAELLGMSPATLSVRVFGVDLPHDPIPWDSDDEGDDTMPTGSWSERALGVETVARPHVYIGPVGIGAVDDETSDWDSPASPPVTGAERAAGGLPRQAPLLVRRVSGNEWRVVSESERRIEEIGRELARICEIQWDEDVAGAPVGTVTGNSPWSPVRGSLLPPKSGSPTYWNPPPPSPSDDTTCEIPSLPSSLVSSPVNPAPMYSPVSDAPLNTPSPNMMITPTHPGLARLLDTPPTPLDADLGDWAVDWLYAPQLGDQLRIESGSSPGKRPLDDPDEVPSSKRGPSRRALLN.

3 disordered regions span residues 81–100 (ETSD…ERAA), 155–209 (TVTG…PVNP), and 269–302 (LRIE…ALLN). The span at 196 to 209 (PSLPSSLVSSPVNP) shows a compositional bias: low complexity.

This is an uncharacterized protein from Ictalurid herpesvirus 1 (strain Auburn) (IcHV-1).